A 493-amino-acid chain; its full sequence is F(420)H(2) dehydrogenase subunit N (493 aa).

A run of 14 helical transmembrane segments spans residues 7–27 (LAPE…GVFL), 34–54 (ILGY…VKSF), 78–98 (LSQF…IASI), 107–127 (TEEF…VASA), 130–150 (LILL…LAGF), 165–185 (FVIG…VYGA), 205–225 (PIGI…MALV), 244–264 (ALLA…VFII), 273–293 (WQFM…VVAV), 310–330 (AGYI…GGIM), 333–353 (LAHA…VWMI), 381–401 (ALCM…AGFM), 404–424 (FVLF…IAIL), and 454–474 (IPFP…VMGL).

Belongs to the complex I subunit 2 family. In terms of assembly, the FPO complex is composed of at least 13 different subunits. FpoA, FpoH, FpoJ, FpoK, FpoL, FpoM and FpoN proteins constitute the membrane sector of the complex.

Its subcellular location is the cell membrane. It catalyses the reaction methanophenazine + reduced coenzyme F420-(gamma-L-Glu)(n) = dihydromethanophenazine + oxidized coenzyme F420-(gamma-L-Glu)(n) + H(+). In terms of biological role, component of the F(420)H(2) dehydrogenase (FPO complex) which is part of the energy-conserving F(420)H(2):heterodisulfide oxidoreductase system. The membrane-bound electron transfer system of the complex plays an important role in the metabolism of methylotrophic methanogens when the organisms grow on methanol or methylamines. Catalyzes the oxidation of methanophenazine to dihydromethanophenazine. It shuttles electrons from F(420)H(2), via FAD and iron-sulfur (Fe-S) centers, to methanophenazine (an electron carrier in the membrane). It couples the redox reaction to proton translocation (for every two electrons transferred, two hydrogen ions are translocated across the cytoplasmic membrane), and thus conserves the redox energy in a proton gradient. It also catalyzes the oxidation of F(420)H(2) with quinones such as 2,3-dimethyl-1,4-naphthoquinone, 2-methyl-1,4-naphthoquinone and tetramethyl-p-benzoquinone. This Methanosarcina mazei (strain ATCC BAA-159 / DSM 3647 / Goe1 / Go1 / JCM 11833 / OCM 88) (Methanosarcina frisia) protein is F(420)H(2) dehydrogenase subunit N (fpoN).